The sequence spans 156 residues: Small ribosomal subunit protein uS7 (156 aa).

Belongs to the universal ribosomal protein uS7 family. In terms of assembly, part of the 30S ribosomal subunit. Contacts proteins S9 and S11.

In terms of biological role, one of the primary rRNA binding proteins, it binds directly to 16S rRNA where it nucleates assembly of the head domain of the 30S subunit. Is located at the subunit interface close to the decoding center, probably blocks exit of the E-site tRNA. This Mycobacteroides abscessus (strain ATCC 19977 / DSM 44196 / CCUG 20993 / CIP 104536 / JCM 13569 / NCTC 13031 / TMC 1543 / L948) (Mycobacterium abscessus) protein is Small ribosomal subunit protein uS7.